Consider the following 340-residue polypeptide: UDP-3-O-(3-hydroxymyristoyl)glucosamine N-acyltransferase (340 aa).

H239 serves as the catalytic Proton acceptor.

Belongs to the transferase hexapeptide repeat family. LpxD subfamily. As to quaternary structure, homotrimer.

It carries out the reaction a UDP-3-O-[(3R)-3-hydroxyacyl]-alpha-D-glucosamine + a (3R)-hydroxyacyl-[ACP] = a UDP-2-N,3-O-bis[(3R)-3-hydroxyacyl]-alpha-D-glucosamine + holo-[ACP] + H(+). It catalyses the reaction UDP-3-O-[(3R)-3-hydroxytetradecanoyl]-alpha-D-glucosamine + (3R)-hydroxytetradecanoyl-[ACP] = UDP-2-N,3-O-bis[(3R)-3-hydroxytetradecanoyl]-alpha-D-glucosamine + holo-[ACP] + H(+). The protein operates within glycolipid biosynthesis; lipid IV(A) biosynthesis; lipid IV(A) from (3R)-3-hydroxytetradecanoyl-[acyl-carrier-protein] and UDP-N-acetyl-alpha-D-glucosamine: step 3/6. Its function is as follows. Catalyzes the N-acylation of UDP-3-O-(hydroxytetradecanoyl)glucosamine using 3-hydroxytetradecanoyl-ACP as the acyl donor. Is involved in the biosynthesis of lipid A, a phosphorylated glycolipid that anchors the lipopolysaccharide to the outer membrane of the cell. This Wigglesworthia glossinidia brevipalpis protein is UDP-3-O-(3-hydroxymyristoyl)glucosamine N-acyltransferase.